A 190-amino-acid chain; its full sequence is Threonylcarbamoyl-AMP synthase (190 aa).

Positions 7-190 (RAALSDVLQA…ALTGKQFRQG (184 aa)) constitute a YrdC-like domain.

It belongs to the SUA5 family. TsaC subfamily.

The protein localises to the cytoplasm. The catalysed reaction is L-threonine + hydrogencarbonate + ATP = L-threonylcarbamoyladenylate + diphosphate + H2O. In terms of biological role, required for the formation of a threonylcarbamoyl group on adenosine at position 37 (t(6)A37) in tRNAs that read codons beginning with adenine. Catalyzes the conversion of L-threonine, HCO(3)(-)/CO(2) and ATP to give threonylcarbamoyl-AMP (TC-AMP) as the acyladenylate intermediate, with the release of diphosphate. The protein is Threonylcarbamoyl-AMP synthase of Yersinia enterocolitica serotype O:8 / biotype 1B (strain NCTC 13174 / 8081).